A 113-amino-acid chain; its full sequence is MNKLRKLKRDTDHRQALMRNLATSLFKHGRIMTTEAKAKDLRRVAEKLITIAKKGDLASYRRVLGYLYEEDVAYDLFQKIAPRYQGRNGGYTRIIKVGPRKGDGAMMVYIELV.

Belongs to the bacterial ribosomal protein bL17 family. In terms of assembly, part of the 50S ribosomal subunit. Contacts protein L32.

The sequence is that of Large ribosomal subunit protein bL17 from Caldicellulosiruptor saccharolyticus (strain ATCC 43494 / DSM 8903 / Tp8T 6331).